The chain runs to 450 residues: MRRMRFSPRSSFARTLLLIVTLLFVSLVTTYLVVLNFAILPSLQQFNKVLAYEVRMLMTDKLQLEDGTQLVVPPAFRREIYRELGISLYTNEAAEEAGLRWAQHYEFLSHQMAQQLGGPTEVRVEVNKSSPVVWLKTWLSPNIWVRVPLTEIHQGDFSPLFRYTLAIMLLAIGGAWLFIRIQNRPLVDLEHAALQVGKGIIPPPLREYGASEVRSVTRAFNHMAAGVKQLADDRTLLMAGVSHDLRTPLTRIRLATEMMGEEDGYLAESINKDIEECNAIIEQFIDYLRTGQEMPMEMADLNSVLGEVIAAESGYEREINTALQAGSIQVKMHPLSIKRAVANMVVNAARYGNGWIKVSSGTESHRAWFQVEDDGPGIKPEQRKHLFQPFVRGDSARSTSGTGLGLAIVQRIIDNHNGMLEIGTSERGGLSIRAWLPVPVARVQGTTKEA.

The next 2 helical transmembrane spans lie at 15–35 (TLLLIVTLLFVSLVTTYLVVL) and 159–179 (PLFRYTLAIMLLAIGGAWLFI). The HAMP domain maps to 180 to 232 (RIQNRPLVDLEHAALQVGKGIIPPPLREYGASEVRSVTRAFNHMAAGVKQLAD). The segment at 223-289 (MAAGVKQLAD…IIEQFIDYLR (67 aa)) is cytoplasmic dimerization domain (CDD), when dimerized forms osmosensitive core. The Histidine kinase domain maps to 240–440 (GVSHDLRTPL…SIRAWLPVPV (201 aa)). ATP is bound by residues His243, 347-351 (NAARY), Asp373, 392-393 (RG), and 402-406 (TGLGL). His243 carries the post-translational modification Phosphohistidine; by autocatalysis.

Homodimer. Post-translationally, autophosphorylated.

The protein localises to the cell inner membrane. The enzyme catalyses ATP + protein L-histidine = ADP + protein N-phospho-L-histidine.. Member of the two-component regulatory system EnvZ/OmpR involved in osmoregulation (particularly of genes ompF and ompC) as well as other genes. EnvZ functions as a membrane-associated protein kinase that phosphorylates OmpR in response to environmental signals; at low osmolarity OmpR activates ompF transcription, while at high osmolarity it represses ompF and activates ompC transcription. The polypeptide is Sensor histidine kinase EnvZ (envZ) (Salmonella typhimurium (strain SL1344)).